Consider the following 397-residue polypeptide: Calponin-like protein clik-2 (397 aa).

Calponin-like repeat units lie at residues 29–54, 73–98, 119–144, 161–189, 209–234, and 255–280; these read LSQQ…RWNI, LRVQ…RFQV, IPKQ…RNQV, LCFQ…RQAT, TPWY…RDVL, and VPLQ…RNTQ. The tract at residues 301-397 is disordered; that stretch reads EETKPPGSAS…EEEEEEEEDE (97 aa). The segment covering 321–332 has biased composition (basic and acidic residues); the sequence is KFEERESSRQSE. Composition is skewed to acidic residues over residues 344-360 and 367-397; these read VEPE…EEKI and EEEE…EEDE.

The protein belongs to the calponin family. In terms of tissue distribution, expressed in pharyngeal muscle cells (at protein level).

Required for pharyngeal pumping. The chain is Calponin-like protein clik-2 from Caenorhabditis elegans.